We begin with the raw amino-acid sequence, 404 residues long: Putative gustatory receptor 94a (404 aa).

Over 1-11 (MDFTSDYAHRR) the chain is Cytoplasmic. A helical membrane pass occupies residues 12–32 (MVKFLTIILIGFMTVFGLLAN). The Extracellular segment spans residues 33–43 (RYRAGRRERFR). A helical transmembrane segment spans residues 44-64 (FSKANLAFASLWAIAFSLVYG). At 65-133 (RQIYKEYQEG…RLDSRSLYIS (69 aa)) the chain is on the cytoplasmic side. Residues 134–154 (IVLALVKTVAFPLTIEVAFIL) form a helical membrane-spanning segment. Topologically, residues 155 to 171 (QQRRQHPEMSLIWTLYR) are extracellular. Residues 172–192 (LFPLIISNFLNNCYFGAMVVV) form a helical membrane-spanning segment. The Cytoplasmic segment spans residues 193 to 260 (KEILYALNRR…HSGKYLTPMS (68 aa)). A helical transmembrane segment spans residues 261 to 281 (LSMILSLICHLLGITVGFYSL). Residues 282 to 296 (YYAIADTLIMGKPYD) are Extracellular-facing. The helical transmembrane segment at 297–317 (GLGSLINLVFLSISLAEITLL) threads the bilayer. The Cytoplasmic segment spans residues 318–376 (THLCNHLLVATRRSAVILQEMNLQHADSRYRQAVHGFTLLVTVTKYQIKPLGLYELDMR). Residues 377–397 (LISNVFSAVASFLLILVQADL) traverse the membrane as a helical segment. Topologically, residues 398–404 (SQRFKMQ) are extracellular.

It belongs to the insect chemoreceptor superfamily. Gustatory receptor (GR) family. Gr22e subfamily. As to expression, in larvae, is expressed in neurons of the terminal external chemosensory organ.

It is found in the cell membrane. Its function is as follows. Probable gustatory receptor which mediates acceptance or avoidance behavior, depending on its substrates. This chain is Putative gustatory receptor 94a (Gr94a), found in Drosophila melanogaster (Fruit fly).